The following is a 63-amino-acid chain: SPbeta prophage-derived uncharacterized protein YomP (63 aa).

This chain is SPbeta prophage-derived uncharacterized protein YomP (yomP), found in Bacillus subtilis (strain 168).